A 291-amino-acid chain; its full sequence is Elongation factor Ts (291 aa).

The interval 81–84 is involved in Mg(2+) ion dislocation from EF-Tu; it reads TDFV. Positions 271-291 are disordered; that stretch reads EGKEKKDESFADEVMAQVRDS.

Belongs to the EF-Ts family.

The protein resides in the cytoplasm. In terms of biological role, associates with the EF-Tu.GDP complex and induces the exchange of GDP to GTP. It remains bound to the aminoacyl-tRNA.EF-Tu.GTP complex up to the GTP hydrolysis stage on the ribosome. The chain is Elongation factor Ts from Halorhodospira halophila (strain DSM 244 / SL1) (Ectothiorhodospira halophila (strain DSM 244 / SL1)).